Here is a 661-residue protein sequence, read N- to C-terminus: UvrABC system protein C (661 aa).

The GIY-YIG domain maps to alanine 26–valine 105. Residues aspartate 215–leucine 250 enclose the UVR domain.

Belongs to the UvrC family. Interacts with UvrB in an incision complex.

It is found in the cytoplasm. In terms of biological role, the UvrABC repair system catalyzes the recognition and processing of DNA lesions. UvrC both incises the 5' and 3' sides of the lesion. The N-terminal half is responsible for the 3' incision and the C-terminal half is responsible for the 5' incision. The polypeptide is UvrABC system protein C (Synechococcus sp. (strain CC9902)).